A 311-amino-acid chain; its full sequence is tRNA-cytidine(32) 2-sulfurtransferase (311 aa).

The PP-loop motif motif lies at 47 to 52 (SGGKDS). Residues Cys122, Cys125, and Cys213 each contribute to the [4Fe-4S] cluster site.

The protein belongs to the TtcA family. Homodimer. It depends on Mg(2+) as a cofactor. The cofactor is [4Fe-4S] cluster.

The protein localises to the cytoplasm. The catalysed reaction is cytidine(32) in tRNA + S-sulfanyl-L-cysteinyl-[cysteine desulfurase] + AH2 + ATP = 2-thiocytidine(32) in tRNA + L-cysteinyl-[cysteine desulfurase] + A + AMP + diphosphate + H(+). It functions in the pathway tRNA modification. Catalyzes the ATP-dependent 2-thiolation of cytidine in position 32 of tRNA, to form 2-thiocytidine (s(2)C32). The sulfur atoms are provided by the cysteine/cysteine desulfurase (IscS) system. The polypeptide is tRNA-cytidine(32) 2-sulfurtransferase (Salmonella paratyphi B (strain ATCC BAA-1250 / SPB7)).